The primary structure comprises 329 residues: Phosphoenolpyruvate transferase (329 aa).

D61 is a binding site for 7,8-didemethyl-8-hydroxy-5-deazariboflavin.

This sequence belongs to the CofD family. In terms of assembly, homodimer. The cofactor is Mg(2+).

It carries out the reaction enolpyruvoyl-2-diphospho-5'-guanosine + 7,8-didemethyl-8-hydroxy-5-deazariboflavin = dehydro coenzyme F420-0 + GMP + H(+). Its pathway is cofactor biosynthesis; coenzyme F420 biosynthesis. In terms of biological role, catalyzes the transfer of the phosphoenolpyruvate moiety from enoylpyruvoyl-2-diphospho-5'-guanosine (EPPG) to 7,8-didemethyl-8-hydroxy-5-deazariboflavin (FO) with the formation of dehydro coenzyme F420-0 and GMP. The sequence is that of Phosphoenolpyruvate transferase from Mycobacterium ulcerans (strain Agy99).